We begin with the raw amino-acid sequence, 500 residues long: Histidine ammonia-lyase (500 aa).

Positions 142-144 (ASG) form a cross-link, 5-imidazolinone (Ala-Gly). Residue S143 is modified to 2,3-didehydroalanine (Ser).

Belongs to the PAL/histidase family. Post-translationally, contains an active site 4-methylidene-imidazol-5-one (MIO), which is formed autocatalytically by cyclization and dehydration of residues Ala-Ser-Gly.

The protein resides in the cytoplasm. The catalysed reaction is L-histidine = trans-urocanate + NH4(+). Its pathway is amino-acid degradation; L-histidine degradation into L-glutamate; N-formimidoyl-L-glutamate from L-histidine: step 1/3. The chain is Histidine ammonia-lyase from Macrococcus caseolyticus (strain JCSC5402) (Macrococcoides caseolyticum).